The following is a 302-amino-acid chain: MQPLMEQIRAFRLHLETERNLSPHTLAAYDRDLRQFAAFVAAEMGDSATAEDVDHLLLRRYLAQLGTQIRKSSQGRKLAAIRSFYRHLLRLGSVSRNPAELIATPKREQRLPFHLDIDQATALMETPTEEENYGLRDRAILETLYSSGLRVSELTGLAIRDINLAGGMLRVMGKGGKERIVPLGSRAVRAIQEYLDSRGGGTATAPLFLNSRGDRINRRSVARIVDAHVHEIAAFKHISPHTLRHTFATHMLEGGADLRAIQELLGHASLSTTQKYTHVSLDRLMEVYDKAHPKARTPEPEE.

The 88-residue stretch at 2–89 (QPLMEQIRAF…AIRSFYRHLL (88 aa)) folds into the Core-binding (CB) domain. A Tyr recombinase domain is found at 110–289 (RLPFHLDIDQ…SLDRLMEVYD (180 aa)). Active-site residues include Arg150, Lys174, His241, Arg244, and His267. Tyr276 serves as the catalytic O-(3'-phospho-DNA)-tyrosine intermediate.

This sequence belongs to the 'phage' integrase family. XerC subfamily. As to quaternary structure, forms a cyclic heterotetrameric complex composed of two molecules of XerC and two molecules of XerD.

Its subcellular location is the cytoplasm. Its function is as follows. Site-specific tyrosine recombinase, which acts by catalyzing the cutting and rejoining of the recombining DNA molecules. The XerC-XerD complex is essential to convert dimers of the bacterial chromosome into monomers to permit their segregation at cell division. It also contributes to the segregational stability of plasmids. The protein is Tyrosine recombinase XerC of Pelobacter propionicus (strain DSM 2379 / NBRC 103807 / OttBd1).